The primary structure comprises 495 residues: 3-octaprenyl-4-hydroxybenzoate carboxy-lyase (495 aa).

Asparagine 172 is a binding site for Mn(2+). Residues 175 to 177 (IYR), 189 to 191 (RWL), and 194 to 195 (RG) contribute to the prenylated FMN site. Glutamate 238 contributes to the Mn(2+) binding site. Residue aspartate 287 is the Proton donor of the active site.

The protein belongs to the UbiD family. In terms of assembly, homohexamer. Prenylated FMN is required as a cofactor. It depends on Mn(2+) as a cofactor.

It is found in the cell membrane. It catalyses the reaction a 4-hydroxy-3-(all-trans-polyprenyl)benzoate + H(+) = a 2-(all-trans-polyprenyl)phenol + CO2. The protein operates within cofactor biosynthesis; ubiquinone biosynthesis. Its function is as follows. Catalyzes the decarboxylation of 3-octaprenyl-4-hydroxy benzoate to 2-octaprenylphenol, an intermediate step in ubiquinone biosynthesis. The sequence is that of 3-octaprenyl-4-hydroxybenzoate carboxy-lyase from Marinobacter nauticus (strain ATCC 700491 / DSM 11845 / VT8) (Marinobacter aquaeolei).